The following is a 416-amino-acid chain: D-amino acid dehydrogenase (416 aa).

3–17 contributes to the FAD binding site; it reads ITILGSGVIGVTTAY.

Belongs to the DadA oxidoreductase family. Requires FAD as cofactor.

It carries out the reaction a D-alpha-amino acid + A + H2O = a 2-oxocarboxylate + AH2 + NH4(+). Its function is as follows. Oxidative deamination of D-amino acids. This chain is D-amino acid dehydrogenase, found in Brucella suis biovar 1 (strain 1330).